A 500-amino-acid polypeptide reads, in one-letter code: Maturase K (500 aa).

The protein belongs to the intron maturase 2 family. MatK subfamily.

The protein resides in the plastid. It is found in the chloroplast. Functionally, usually encoded in the trnK tRNA gene intron. Probably assists in splicing its own and other chloroplast group II introns. The protein is Maturase K of Proboscidea louisianica (Louisiana Devil's-claw).